Consider the following 90-residue polypeptide: MARTVFCQKLQKEAEGLGFQLYPGEIGEKIFNNISKEAWAQWQHKQTMLINEKHLNMMDPEHRSFLEQQMVGFLFENKEVEIEGYKPPEK.

The protein belongs to the Fe(2+)-trafficking protein family.

Could be a mediator in iron transactions between iron acquisition and iron-requiring processes, such as synthesis and/or repair of Fe-S clusters in biosynthetic enzymes. This chain is Probable Fe(2+)-trafficking protein, found in Pseudoalteromonas translucida (strain TAC 125).